The chain runs to 408 residues: Histidine--tRNA ligase (408 aa).

Belongs to the class-II aminoacyl-tRNA synthetase family. As to quaternary structure, homodimer.

It is found in the cytoplasm. It catalyses the reaction tRNA(His) + L-histidine + ATP = L-histidyl-tRNA(His) + AMP + diphosphate + H(+). The polypeptide is Histidine--tRNA ligase (Campylobacter jejuni subsp. jejuni serotype O:6 (strain 81116 / NCTC 11828)).